Here is a 142-residue protein sequence, read N- to C-terminus: MMNYRHILVMIDLSPDSYSLIHKASFISNLHNDAKISLIYVNTDYSDAYTGLIDVDIRNIQSYRLQDINNMLKNLKNYIYFPVHKVFIGNGDMTSCLLDVTQKYNIDLIIFGHYQDFWSKIVFSLRQIINSLHIDMLIVPFY.

Belongs to the universal stress protein A family. As to quaternary structure, homodimer.

It localises to the cytoplasm. Required for resistance to DNA-damaging agents. This Buchnera aphidicola subsp. Baizongia pistaciae (strain Bp) protein is Universal stress protein A (uspA).